The primary structure comprises 245 residues: Adenosylcobinamide-GDP ribazoletransferase (245 aa).

A run of 5 helical transmembrane segments spans residues 31-51, 57-77, 109-129, 134-154, and 176-196; these read LLHYPAVGLFLGALLWLAALL, PLLQAALLLALWVALTGALHL, VAVVVLVIMLLLKFSALLVVL, PAALVLAPLLGRAALLALFLC, and ALMVLALVVIGCLLLGATGLL.

Belongs to the CobS family. Mg(2+) serves as cofactor.

Its subcellular location is the cell inner membrane. The catalysed reaction is alpha-ribazole + adenosylcob(III)inamide-GDP = adenosylcob(III)alamin + GMP + H(+). The enzyme catalyses alpha-ribazole 5'-phosphate + adenosylcob(III)inamide-GDP = adenosylcob(III)alamin 5'-phosphate + GMP + H(+). It functions in the pathway cofactor biosynthesis; adenosylcobalamin biosynthesis; adenosylcobalamin from cob(II)yrinate a,c-diamide: step 7/7. Joins adenosylcobinamide-GDP and alpha-ribazole to generate adenosylcobalamin (Ado-cobalamin). Also synthesizes adenosylcobalamin 5'-phosphate from adenosylcobinamide-GDP and alpha-ribazole 5'-phosphate. The polypeptide is Adenosylcobinamide-GDP ribazoletransferase (Stutzerimonas stutzeri (strain A1501) (Pseudomonas stutzeri)).